A 219-amino-acid polypeptide reads, in one-letter code: Mediator of RNA polymerase II transcription subunit 18 (219 aa).

This sequence belongs to the Mediator complex subunit 18 family. In terms of assembly, component of the Mediator complex. Interacts with YY1 to suppress disease susceptibility via the repression of genes glutaredoxins GRX480, GRXS13 and thioredoxin TRX-h5. Binds to ABI4 to regulate abscisic acid responses; recruited by ABI4 to ABI5 promoter in the presence of abscisic acid (ABA). Interacts with SUF4 to regulate flowering time; recruited by SUF4 to FLC promoter.

It localises to the nucleus. Its function is as follows. Component of the Mediator complex, a coactivator involved in the regulated transcription of nearly all RNA polymerase II-dependent genes. Mediator functions as a bridge to convey information from gene-specific regulatory proteins to the basal RNA polymerase II transcription machinery. The Mediator complex, having a compact conformation in its free form, is recruited to promoters by direct interactions with regulatory proteins and serves for the assembly of a functional pre-initiation complex with RNA polymerase II and the general transcription factors. Involved in the regulation of histone H3 lysine tri-methylation (H3K36me3). Associates with the promoter, coding and terminator regions of target genes suggesting its function in transcription initiation, elongation and termination. Multifunctional protein which regulates plant immunity, especially during necrotrophic fungal infection (e.g. B.cinerea and A.brassicicola), flowering time and responses to hormones (e.g. abscisic acid ABA and ethylene) through interactions with distinct transcription factors. The polypeptide is Mediator of RNA polymerase II transcription subunit 18 (Arabidopsis thaliana (Mouse-ear cress)).